The primary structure comprises 1381 residues: DNA-directed RNA polymerase subunit beta'' (1381 aa).

4 residues coordinate Zn(2+): Cys-224, Cys-295, Cys-302, and Cys-305.

It belongs to the RNA polymerase beta' chain family. RpoC2 subfamily. In plastids the minimal PEP RNA polymerase catalytic core is composed of four subunits: alpha, beta, beta', and beta''. When a (nuclear-encoded) sigma factor is associated with the core the holoenzyme is formed, which can initiate transcription. Zn(2+) is required as a cofactor.

It is found in the plastid. It localises to the chloroplast. The catalysed reaction is RNA(n) + a ribonucleoside 5'-triphosphate = RNA(n+1) + diphosphate. In terms of biological role, DNA-dependent RNA polymerase catalyzes the transcription of DNA into RNA using the four ribonucleoside triphosphates as substrates. This chain is DNA-directed RNA polymerase subunit beta'', found in Lactuca sativa (Garden lettuce).